Consider the following 328-residue polypeptide: Formimidoylglutamase (328 aa).

The Mn(2+) site is built by His-133, Asp-159, His-161, Asp-163, Asp-253, and Asp-255.

This sequence belongs to the arginase family. Mn(2+) is required as a cofactor.

The enzyme catalyses N-formimidoyl-L-glutamate + H2O = formamide + L-glutamate. Its pathway is amino-acid degradation; L-histidine degradation into L-glutamate; L-glutamate from N-formimidoyl-L-glutamate (hydrolase route): step 1/1. Catalyzes the conversion of N-formimidoyl-L-glutamate to L-glutamate and formamide. This Streptococcus pyogenes serotype M6 (strain ATCC BAA-946 / MGAS10394) protein is Formimidoylglutamase.